A 331-amino-acid chain; its full sequence is MPEILDQARTQVLENGVGLDEAGVLAVLNLPDEHLPAALQLAHEVRMRWCGPEVEVEGIVSLKTGGCPEDCHFCSQSGLFTSPVRAVWLDIPSLVEAAKQTAKTGATEFCIVAAVRGPDDRLMRQLREGVAAIQAEVDIQVAASVGMLTQEQVDELVEMGVHRYNHNLETCRSYFPNVVTTHSWEERWETLRMVRESGMEVCCGGILGLGESVEQRAEFAAQLAELDPHEVPLNFLNPRPGTPLGDRSVVEGKDALRAIAAFRLAMPRTILRYAGGRELTLGDLGTRSGLLGGINAVIVGNYLTTLGRPATTDLELLEDLKMPVKALSATL.

The 226-residue stretch at 52 to 277 (PEVEVEGIVS…RTILRYAGGR (226 aa)) folds into the Radical SAM core domain. [4Fe-4S] cluster contacts are provided by Cys67, Cys71, and Cys74. Cys110, Cys202, and Arg272 together coordinate [2Fe-2S] cluster.

It belongs to the radical SAM superfamily. Biotin synthase family. In terms of assembly, homodimer. [4Fe-4S] cluster serves as cofactor. [2Fe-2S] cluster is required as a cofactor.

It catalyses the reaction (4R,5S)-dethiobiotin + (sulfur carrier)-SH + 2 reduced [2Fe-2S]-[ferredoxin] + 2 S-adenosyl-L-methionine = (sulfur carrier)-H + biotin + 2 5'-deoxyadenosine + 2 L-methionine + 2 oxidized [2Fe-2S]-[ferredoxin]. The protein operates within cofactor biosynthesis; biotin biosynthesis; biotin from 7,8-diaminononanoate: step 2/2. Functionally, catalyzes the conversion of dethiobiotin (DTB) to biotin by the insertion of a sulfur atom into dethiobiotin via a radical-based mechanism. The polypeptide is Biotin synthase (Salinispora tropica (strain ATCC BAA-916 / DSM 44818 / JCM 13857 / NBRC 105044 / CNB-440)).